We begin with the raw amino-acid sequence, 262 residues long: Thrombin-like enzyme gyroxin B1.3 (262 aa).

A signal peptide spans 1-18 (MVLIRVLANLLILQLSYA). Positions 19 to 262 (QKSSELVIGG…AGSETVNCPS (244 aa)) are excised as a propeptide. Residues 25–253 (VIGGDECNIN…HLDWIQNIIA (229 aa)) form the Peptidase S1 domain. 6 cysteine pairs are disulfide-bonded: cysteine 31–cysteine 165, cysteine 52–cysteine 68, cysteine 102–cysteine 260, cysteine 144–cysteine 214, cysteine 176–cysteine 193, and cysteine 204–cysteine 229. Histidine 67 (charge relay system) is an active-site residue. Asparagine 105 carries N-linked (GlcNAc...) asparagine glycosylation. Aspartate 112 functions as the Charge relay system in the catalytic mechanism. Serine 208 acts as the Charge relay system in catalysis.

This sequence belongs to the peptidase S1 family. Snake venom subfamily. Monomer. In terms of tissue distribution, expressed by the venom gland.

The protein localises to the secreted. Thrombin-like snake venom serine protease. Displays a specificity similar to trypsin. Releases only fibrinopeptide A in the conversion of fibrinogen to fibrin. Reversibly increases the permeability of the blood brain barrier (BBB) in mice. Induces the barrel rotation syndrome in mice, which is manifested by gyroxin-like, rapid rolling motions. This syndrome may be due to its effect on BBB permeability, and certainly also to other actions affecting endogenous substrates present in the endothelium, nervous tissues or blood. Also shows a moderate inhibitory activity on the human voltage-gated potassium channel Kv10.1/KCNH1/EAG1 (58% current inhibition at 5 uM). It blocks Kv10.1/KCNH1/EAG1 in a time and dose-dependent manner and with a mechanism independent of its enzymatic activity. It may have a preference in interacting with Kv10.1/KCNH1/EAG1 in its closed state, since the inhibitory effect of the toxin is decreased at more depolarized potentials. The polypeptide is Thrombin-like enzyme gyroxin B1.3 (Crotalus durissus terrificus (South American rattlesnake)).